The primary structure comprises 424 residues: 2,3-bisphosphoglycerate-independent phosphoglycerate mutase (424 aa).

It belongs to the BPG-independent phosphoglycerate mutase family. A-PGAM subfamily.

The catalysed reaction is (2R)-2-phosphoglycerate = (2R)-3-phosphoglycerate. It participates in carbohydrate degradation; glycolysis; pyruvate from D-glyceraldehyde 3-phosphate: step 3/5. Its function is as follows. Catalyzes the interconversion of 2-phosphoglycerate and 3-phosphoglycerate. This is 2,3-bisphosphoglycerate-independent phosphoglycerate mutase from Aeropyrum pernix (strain ATCC 700893 / DSM 11879 / JCM 9820 / NBRC 100138 / K1).